Reading from the N-terminus, the 351-residue chain is GDSL esterase/lipase At3g14820 (351 aa).

The first 22 residues, 1-22 (MDLHLIGFLLWFFVVQVTTSSA), serve as a signal peptide directing secretion. N-linked (GlcNAc...) asparagine glycosylation occurs at asparagine 25. The Nucleophile role is filled by serine 39. Residues aspartate 325 and histidine 328 contribute to the active site.

This sequence belongs to the 'GDSL' lipolytic enzyme family.

It is found in the secreted. This chain is GDSL esterase/lipase At3g14820, found in Arabidopsis thaliana (Mouse-ear cress).